The sequence spans 338 residues: Phosphoribosylformylglycinamidine cyclo-ligase (338 aa).

It belongs to the AIR synthase family.

It localises to the cytoplasm. It carries out the reaction 2-formamido-N(1)-(5-O-phospho-beta-D-ribosyl)acetamidine + ATP = 5-amino-1-(5-phospho-beta-D-ribosyl)imidazole + ADP + phosphate + H(+). It participates in purine metabolism; IMP biosynthesis via de novo pathway; 5-amino-1-(5-phospho-D-ribosyl)imidazole from N(2)-formyl-N(1)-(5-phospho-D-ribosyl)glycinamide: step 2/2. The chain is Phosphoribosylformylglycinamidine cyclo-ligase from Thermoplasma volcanium (strain ATCC 51530 / DSM 4299 / JCM 9571 / NBRC 15438 / GSS1).